Reading from the N-terminus, the 119-residue chain is Holo-[acyl-carrier-protein] synthase (119 aa).

Asp8 and Glu58 together coordinate Mg(2+).

Belongs to the P-Pant transferase superfamily. AcpS family. The cofactor is Mg(2+).

It is found in the cytoplasm. The enzyme catalyses apo-[ACP] + CoA = holo-[ACP] + adenosine 3',5'-bisphosphate + H(+). Functionally, transfers the 4'-phosphopantetheine moiety from coenzyme A to a Ser of acyl-carrier-protein. This is Holo-[acyl-carrier-protein] synthase from Halalkalibacterium halodurans (strain ATCC BAA-125 / DSM 18197 / FERM 7344 / JCM 9153 / C-125) (Bacillus halodurans).